The chain runs to 386 residues: Succinate--CoA ligase [ADP-forming] subunit beta (386 aa).

Residues 9–244 (KDLLTSYQLP…PSQENIRDVL (236 aa)) enclose the ATP-grasp domain. ATP contacts are provided by residues Lys-46, 53–55 (GRG), Val-102, and Glu-107. Positions 199 and 213 each coordinate Mg(2+). Residues Asn-264 and 321–323 (GIM) each bind substrate.

Belongs to the succinate/malate CoA ligase beta subunit family. As to quaternary structure, heterotetramer of two alpha and two beta subunits. Requires Mg(2+) as cofactor.

The catalysed reaction is succinate + ATP + CoA = succinyl-CoA + ADP + phosphate. It catalyses the reaction GTP + succinate + CoA = succinyl-CoA + GDP + phosphate. The protein operates within carbohydrate metabolism; tricarboxylic acid cycle; succinate from succinyl-CoA (ligase route): step 1/1. Functionally, succinyl-CoA synthetase functions in the citric acid cycle (TCA), coupling the hydrolysis of succinyl-CoA to the synthesis of either ATP or GTP and thus represents the only step of substrate-level phosphorylation in the TCA. The beta subunit provides nucleotide specificity of the enzyme and binds the substrate succinate, while the binding sites for coenzyme A and phosphate are found in the alpha subunit. This chain is Succinate--CoA ligase [ADP-forming] subunit beta, found in Chlamydia muridarum (strain MoPn / Nigg).